Consider the following 63-residue polypeptide: Large ribosomal subunit protein bL32 (63 aa).

Disordered regions lie at residues 1 to 25 and 42 to 63; these read MAVPARKTSKQKKRSRRGHIKLTTP and VSPKGFYKGRQVANENKQQNND. Positions 7-20 are enriched in basic residues; sequence KTSKQKKRSRRGHI. The segment covering 54 to 63 has biased composition (polar residues); it reads ANENKQQNND.

This sequence belongs to the bacterial ribosomal protein bL32 family.

The chain is Large ribosomal subunit protein bL32 from Lactobacillus johnsonii (strain CNCM I-12250 / La1 / NCC 533).